The following is a 212-amino-acid chain: 3,4-dihydroxy-2-butanone 4-phosphate synthase (212 aa).

D-ribulose 5-phosphate contacts are provided by residues 37 to 38, Asp-42, 150 to 154, and Glu-174; these read RE and RRGHT. Glu-38 lines the Mg(2+) pocket. His-153 lines the Mg(2+) pocket.

This sequence belongs to the DHBP synthase family. Homodimer. Requires Mg(2+) as cofactor. Mn(2+) serves as cofactor.

It catalyses the reaction D-ribulose 5-phosphate = (2S)-2-hydroxy-3-oxobutyl phosphate + formate + H(+). Its pathway is cofactor biosynthesis; riboflavin biosynthesis; 2-hydroxy-3-oxobutyl phosphate from D-ribulose 5-phosphate: step 1/1. In terms of biological role, catalyzes the conversion of D-ribulose 5-phosphate to formate and 3,4-dihydroxy-2-butanone 4-phosphate. This chain is 3,4-dihydroxy-2-butanone 4-phosphate synthase, found in Shewanella halifaxensis (strain HAW-EB4).